The following is a 357-amino-acid chain: Anthranilate phosphoribosyltransferase (357 aa).

Residues Gly-94, 97–98 (GD), Thr-102, 104–107 (NLST), 122–130 (KHGNRAASS), and Gly-134 contribute to the 5-phospho-alpha-D-ribose 1-diphosphate site. Gly-94 serves as a coordination point for anthranilate. Residue Ser-106 participates in Mg(2+) binding. An anthranilate-binding site is contributed by Asn-125. An anthranilate-binding site is contributed by Arg-180. Mg(2+) contacts are provided by Asp-238 and Glu-239.

The protein belongs to the anthranilate phosphoribosyltransferase family. Homodimer. Requires Mg(2+) as cofactor.

It carries out the reaction N-(5-phospho-beta-D-ribosyl)anthranilate + diphosphate = 5-phospho-alpha-D-ribose 1-diphosphate + anthranilate. The protein operates within amino-acid biosynthesis; L-tryptophan biosynthesis; L-tryptophan from chorismate: step 2/5. Its function is as follows. Catalyzes the transfer of the phosphoribosyl group of 5-phosphorylribose-1-pyrophosphate (PRPP) to anthranilate to yield N-(5'-phosphoribosyl)-anthranilate (PRA). This is Anthranilate phosphoribosyltransferase from Mycobacterium sp. (strain JLS).